Consider the following 199-residue polypeptide: MQYPLPIAHLIDAYMRLPGVGEKTATRLAFYTMDMPEKDVEDFSKALIQVKNDIHQCPICGNITEKEVCDICSNPNRDQTTIMVVEQPKDLMAFEEMGEYDGLYHVLHGVLSPMDGIGPEEINIKSLITRLQKNDDVKEVILALNSTPEGESTAMYISKLIKPAEIKVTRLAAGLSVGSDIEYANSITLKRAVQGRTAL.

A C4-type zinc finger spans residues 57-72 (CPICGNITEKEVCDIC). Residues 80 to 176 (TTIMVVEQPK…KVTRLAAGLS (97 aa)) form the Toprim domain.

Belongs to the RecR family.

Its function is as follows. May play a role in DNA repair. It seems to be involved in an RecBC-independent recombinational process of DNA repair. It may act with RecF and RecO. The chain is Recombination protein RecR from Lactobacillus helveticus (strain DPC 4571).